We begin with the raw amino-acid sequence, 229 residues long: Uracil-DNA glycosylase (229 aa).

Residue aspartate 64 is the Proton acceptor of the active site.

Belongs to the uracil-DNA glycosylase (UDG) superfamily. UNG family.

It localises to the cytoplasm. It catalyses the reaction Hydrolyzes single-stranded DNA or mismatched double-stranded DNA and polynucleotides, releasing free uracil.. Its function is as follows. Excises uracil residues from the DNA which can arise as a result of misincorporation of dUMP residues by DNA polymerase or due to deamination of cytosine. In Shigella flexneri serotype 5b (strain 8401), this protein is Uracil-DNA glycosylase.